We begin with the raw amino-acid sequence, 184 residues long: Interferon alpha-3 (184 aa).

The first 23 residues, 1–23, serve as a signal peptide directing secretion; that stretch reads MALPVSLLMALVVLSCHSSCSLG. Intrachain disulfides connect Cys-24/Cys-122 and Cys-52/Cys-162.

Belongs to the alpha/beta interferon family.

The protein resides in the secreted. Functionally, produced by macrophages, IFN-alpha have antiviral activities. Interferon stimulates the production of two enzymes: a protein kinase and an oligoadenylate synthetase. This chain is Interferon alpha-3, found in Equus caballus (Horse).